Reading from the N-terminus, the 227-residue chain is MVMYGENVPVHKKFVQYGMLKTELDEYLEEELGRAGYGGMRLQRVPNATKIIAYVERPAIAIGRRGRNIRRVEEEVQERFPLLGRVSIEVKELPSPELNPRVVARRLASALERGIHFRRAAYGALRRIMNAGAKGAMIILSGKLIGARARTEKFMEGAVKYCGEPGDEYMIEGYVQAVTKPGAIGVTVRIMPPDVELPDELEIRPPEEVEDELKELIGKSEDEAEGA.

Residues 24–94 (LDEYLEEELG…RVSIEVKELP (71 aa)) enclose the KH type-2 domain. A disordered region spans residues 207–227 (EEVEDELKELIGKSEDEAEGA).

The protein belongs to the universal ribosomal protein uS3 family. Part of the 30S ribosomal subunit.

Its function is as follows. Binds the lower part of the 30S subunit head. In Methanopyrus kandleri (strain AV19 / DSM 6324 / JCM 9639 / NBRC 100938), this protein is Small ribosomal subunit protein uS3.